A 407-amino-acid polypeptide reads, in one-letter code: CCCH-type zinc finger protein oma-1 (407 aa).

Residues 1 to 39 form a disordered region; it reads MNVNGENNEKIDEHHLESSLAGVPTLPVSPLDHAKDLSQ. The segment covering 7–17 has biased composition (basic and acidic residues); that stretch reads NNEKIDEHHLE. The tract at residues 46 to 80 is required for taf-4 binding; the sequence is IGDLVTQTANLIAIKKQLLEDIAFNQHIQSMQVRA. 2 consecutive C3H1-type zinc fingers follow at residues 112-140 and 154-182; these read SYKT…HGEE and KYKT…HPDH. Thr-239 carries the phosphothreonine; by mbk-2 and GSK3 modification. Residue Ser-302 is modified to Phosphoserine; by mbk-2. Phosphothreonine; by GSK3 is present on Thr-339.

In terms of assembly, interacts with taf-4 (via C-terminus). Interacts with ifet-1. Component of a ribonucleoprotein particle complex that interacts with cgh-1 and car-1 in an RNA-dependent manner. Association with many proteins is dependent on the presence of RNA. Phosphorylation by mbk-2 and by gsk-3 are required for its rapid degradation following meiosis II. Exclusively expressed in the hermaphrodite gonad. Expressed prior to oocyte division. Widely distributed throughout gonadal oocytes from the mitotic stage to the developing diakinesis stage. Expressed in sperm.

The protein resides in the cytoplasm. It localises to the cytoplasmic granule. Its subcellular location is the nucleus. Its function is as follows. Zinc-finger RNA-binding protein that binds to 5'-UA[AU]-3' motifs in the 3'-UTR of maternal mRNAs to suppress translation in oocytes and embryos. Acts as a ribonucleoprotein particle component that may exert part of its function within cytoplasmic foci of unfertilized oocytes. Acts redundantly with oma-2 to control the temporal expression and distribution of maternal proteins and thereby promote meiotic progression, oocyte maturation, fertilization and embryonic development. Recruits the translational repressor ifet-1 to the 3'-UTR of mei-1 and zif-1 to negatively regulate their translation. By suppressing the translation of the E3 ligase zif-1, may in turn play a role in the stabilization of zif-1 targets such as the maternal transcriptional repressor protein pie-1. Following fertilization, sequesters the transcription initiation factor, taf-4, in the cytoplasm, which prevents its nuclear localization and thus allows for transcriptional suppression in early embryos, but not in oocytes. Also, together with oma-2, is involved in P-granule distribution during embryonic development. The protein is CCCH-type zinc finger protein oma-1 of Caenorhabditis elegans.